A 376-amino-acid polypeptide reads, in one-letter code: Cyclin-D3-1 (376 aa).

Residues 298-376 (KRKSHDSSSS…HLPWAIVATP (79 aa)) are disordered. A compositionally biased stretch (low complexity) spans 321 to 349 (NSDESSNDSWSASSCNPPTSSSSPQQQPP). Positions 354–363 (RGAEENEKKK) are enriched in basic and acidic residues.

The protein belongs to the cyclin family. Cyclin D subfamily. Interacts with the C-terminal domain of CDKA-1. Interacts with KRP1/ICK1. Interacts with KRP6. Phosphorylated. As to expression, highly expressed in roots and at lower levels in leaves and flowers. Expressed in vegetative shoot meristem and inflorescence.

Involved in the control of the cell cycle at the G1/S (start) transition. Activates the G1/S phase transition in response to cytokinin hormone signal, but declines in response to sucrose starvation leading to G1 arrest. Involved in the induction of mitotic cell division. Plays an important role in the switch from cell proliferation to the final stages of differentiation during plant development. May not be involved in the activation of cell cycle in the root apical meristem (RAM) in the early phase of seed germination. Promotes divisions in the guard cells (GCs) after the guard mother cells (GMC) symmetric division. In Arabidopsis thaliana (Mouse-ear cress), this protein is Cyclin-D3-1 (CYCD3-1).